A 533-amino-acid polypeptide reads, in one-letter code: Lysine--tRNA ligase 1 (533 aa).

The 'HIGH' region signature appears at 26–34 (PSGHIHIGN). The 'KMSKS' region motif lies at 272-276 (AMSSS).

This sequence belongs to the class-I aminoacyl-tRNA synthetase family.

It localises to the cytoplasm. The enzyme catalyses tRNA(Lys) + L-lysine + ATP = L-lysyl-tRNA(Lys) + AMP + diphosphate. The chain is Lysine--tRNA ligase 1 from Methanosarcina acetivorans (strain ATCC 35395 / DSM 2834 / JCM 12185 / C2A).